A 112-amino-acid polypeptide reads, in one-letter code: Ribonuclease P protein component (112 aa).

Belongs to the RnpA family. Consists of a catalytic RNA component (M1 or rnpB) and a protein subunit.

It carries out the reaction Endonucleolytic cleavage of RNA, removing 5'-extranucleotides from tRNA precursor.. Functionally, RNaseP catalyzes the removal of the 5'-leader sequence from pre-tRNA to produce the mature 5'-terminus. It can also cleave other RNA substrates such as 4.5S RNA. The protein component plays an auxiliary but essential role in vivo by binding to the 5'-leader sequence and broadening the substrate specificity of the ribozyme. The polypeptide is Ribonuclease P protein component (Mycoplasmopsis synoviae (strain 53) (Mycoplasma synoviae)).